Consider the following 158-residue polypeptide: 6,7-dimethyl-8-ribityllumazine synthase (158 aa).

5-amino-6-(D-ribitylamino)uracil is bound by residues F23, 61–63 (SFE), and 85–87 (AVI). 90 to 91 (ET) provides a ligand contact to (2S)-2-hydroxy-3-oxobutyl phosphate. H93 functions as the Proton donor in the catalytic mechanism. A 5-amino-6-(D-ribitylamino)uracil-binding site is contributed by F118. R132 is a binding site for (2S)-2-hydroxy-3-oxobutyl phosphate.

It belongs to the DMRL synthase family.

The enzyme catalyses (2S)-2-hydroxy-3-oxobutyl phosphate + 5-amino-6-(D-ribitylamino)uracil = 6,7-dimethyl-8-(1-D-ribityl)lumazine + phosphate + 2 H2O + H(+). Its pathway is cofactor biosynthesis; riboflavin biosynthesis; riboflavin from 2-hydroxy-3-oxobutyl phosphate and 5-amino-6-(D-ribitylamino)uracil: step 1/2. In terms of biological role, catalyzes the formation of 6,7-dimethyl-8-ribityllumazine by condensation of 5-amino-6-(D-ribitylamino)uracil with 3,4-dihydroxy-2-butanone 4-phosphate. This is the penultimate step in the biosynthesis of riboflavin. The sequence is that of 6,7-dimethyl-8-ribityllumazine synthase from Prochlorococcus marinus (strain MIT 9301).